A 397-amino-acid polypeptide reads, in one-letter code: Phosphoglycerate kinase (397 aa).

Residues 21 to 23 (DVN), Arg-36, 59 to 62 (HFGR), Arg-119, and Arg-152 each bind substrate. ATP-binding positions include Lys-202, Glu-324, and 354-357 (GGDT).

Belongs to the phosphoglycerate kinase family. As to quaternary structure, monomer.

The protein localises to the cytoplasm. It catalyses the reaction (2R)-3-phosphoglycerate + ATP = (2R)-3-phospho-glyceroyl phosphate + ADP. It participates in carbohydrate degradation; glycolysis; pyruvate from D-glyceraldehyde 3-phosphate: step 2/5. In Cereibacter sphaeroides (strain ATCC 17029 / ATH 2.4.9) (Rhodobacter sphaeroides), this protein is Phosphoglycerate kinase.